A 424-amino-acid polypeptide reads, in one-letter code: UPF0597 protein Shew185_3080 (424 aa).

The protein belongs to the UPF0597 family.

The chain is UPF0597 protein Shew185_3080 from Shewanella baltica (strain OS185).